Consider the following 366-residue polypeptide: Probable neutral protease 2 homolog B (366 aa).

Residues 1–19 (MQVIVALAALSSLAAPALG) form the signal peptide. A propeptide spanning residues 20–189 (FSIPRGVPVS…RGPRSRITKR (170 aa)) is cleaved from the precursor. 3 cysteine pairs are disulfide-bonded: Cys197/Cys267, Cys274/Cys292, and Cys306/Cys366. His317 lines the Zn(2+) pocket. The active site involves Glu318. The Zn(2+) site is built by His321 and Asp332.

It belongs to the peptidase M35 family. The cofactor is Zn(2+).

The protein resides in the secreted. It carries out the reaction Preferential cleavage of bonds with hydrophobic residues in P1'. Also 3-Asn-|-Gln-4 and 8-Gly-|-Ser-9 bonds in insulin B chain.. Probable secreted metalloprotease that shows high activities on basic nuclear substrates such as histone and protamine. May be involved in virulence. The chain is Probable neutral protease 2 homolog B (NpII-B) from Trichophyton rubrum (Athlete's foot fungus).